The chain runs to 161 residues: Putative 4-hydroxy-4-methyl-2-oxoglutarate aldolase (161 aa).

Residues 78–81 and R100 each bind substrate; that span reads GDVI. A divalent metal cation is bound at residue D101.

It belongs to the class II aldolase/RraA-like family. In terms of assembly, homotrimer. A divalent metal cation is required as a cofactor.

It catalyses the reaction 4-hydroxy-4-methyl-2-oxoglutarate = 2 pyruvate. The enzyme catalyses oxaloacetate + H(+) = pyruvate + CO2. In terms of biological role, catalyzes the aldol cleavage of 4-hydroxy-4-methyl-2-oxoglutarate (HMG) into 2 molecules of pyruvate. Also contains a secondary oxaloacetate (OAA) decarboxylase activity due to the common pyruvate enolate transition state formed following C-C bond cleavage in the retro-aldol and decarboxylation reactions. The polypeptide is Putative 4-hydroxy-4-methyl-2-oxoglutarate aldolase (Mycobacterium avium (strain 104)).